The chain runs to 280 residues: Endochitinase A (280 aa).

The N-terminal stretch at Met1 to Ala25 is a signal peptide. A Chitin-binding type-1 domain is found at Gln26–Ser60. 4 cysteine pairs are disulfide-bonded: Cys28–Cys36, Cys30–Cys42, Cys35–Cys49, and Cys53–Cys58. The interval Gly61–Gly77 is hinge region (poly-Gly). Positions Ala78–Cys280 are catalytic. Cys100 and Cys149 are oxidised to a cystine. Catalysis depends on Glu144, which acts as the Proton donor. Asn155 carries N-linked (GlcNAc...) asparagine glycosylation. 2 disulfides stabilise this stretch: Cys161–Cys170 and Cys248–Cys280. A glycan (N-linked (GlcNAc...) asparagine) is linked at Asn277.

Belongs to the glycosyl hydrolase 19 family. Chitinase class IV subfamily.

It localises to the secreted. It carries out the reaction Random endo-hydrolysis of N-acetyl-beta-D-glucosaminide (1-&gt;4)-beta-linkages in chitin and chitodextrins.. Inactivated by l-ethyl-3-(3-dimethylaminopropyl)carbodiimide (EDC) in the absence of exogenous nucleophiles (e.g. GlcNAc4, GlcNAc3 and GlcNAc2). Not inhibited by tetra-N-acetylchitopentaose or modified chitotetraose substrate TMG-chitotriomycin-pMP, containing a free, non-acetylated glucosaminyl residue or a N-trimethylamino glucosamine (TMG) residue at the non-reducing terminus, respectively. Functionally, defense against chitin-containing fungal pathogens. Hydrolyzes glycol chitin and tetra-N-acetylchitotetraose in vitro. Its action is countered by fungal polyglycine hydrolases and fungalysin, that cleave the chitin-binding domain from the protein. This is Endochitinase A from Zea mays (Maize).